We begin with the raw amino-acid sequence, 24 residues long: 29 kDa outer membrane protein (24 aa).

The protein localises to the cell outer membrane. Functionally, may be involved in transporting molecules across the outer membrane. This chain is 29 kDa outer membrane protein, found in Acinetobacter baumannii.